We begin with the raw amino-acid sequence, 428 residues long: Chaperone SurA (428 aa).

Positions Met-1 to Ala-13 are cleaved as a signal peptide. 2 consecutive PpiC domains span residues Ser-164–Glu-265 and Arg-276–Gly-375. The interval Thr-211 to Ala-230 is disordered.

It localises to the periplasm. It catalyses the reaction [protein]-peptidylproline (omega=180) = [protein]-peptidylproline (omega=0). Chaperone involved in the correct folding and assembly of outer membrane proteins. Recognizes specific patterns of aromatic residues and the orientation of their side chains, which are found more frequently in integral outer membrane proteins. May act in both early periplasmic and late outer membrane-associated steps of protein maturation. This chain is Chaperone SurA, found in Pseudomonas syringae pv. syringae (strain B728a).